We begin with the raw amino-acid sequence, 1135 residues long: Phytochrome C (1135 aa).

The segment covering 1-11 (MSSPLNNRGTC) has biased composition (polar residues). The tract at residues 1–26 (MSSPLNNRGTCSRSSSARSRHSARVV) is disordered. The GAF domain maps to 216–399 (NLSLLCDVLV…VFGIQLNKEV (184 aa)). Cys-321 contacts phytochromobilin. PAS domains follow at residues 618–688 (VTNE…LQGI) and 748–822 (IQGD…TKLS). The region spanning 902–1122 (YIHQELRNPL…IILIEFPVAQ (221 aa)) is the Histidine kinase domain.

It belongs to the phytochrome family. As to quaternary structure, homodimer. Post-translationally, contains one covalently linked phytochromobilin chromophore.

Regulatory photoreceptor which exists in two forms that are reversibly interconvertible by light: the Pr form that absorbs maximally in the red region of the spectrum and the Pfr form that absorbs maximally in the far-red region. Photoconversion of Pr to Pfr induces an array of morphogenic responses, whereas reconversion of Pfr to Pr cancels the induction of those responses. Pfr controls the expression of a number of nuclear genes including those encoding the small subunit of ribulose-bisphosphate carboxylase, chlorophyll A/B binding protein, protochlorophyllide reductase, rRNA, etc. It also controls the expression of its own gene(s) in a negative feedback fashion. This is Phytochrome C (PHYC) from Sorghum bicolor (Sorghum).